The primary structure comprises 277 residues: Ribosome-inactivating protein luffin-alpha (277 aa).

The first 19 residues, 1–19 (MKRFTVLILAIFVAASTVE), serve as a signal peptide directing secretion. Residue Glu179 is part of the active site.

Belongs to the ribosome-inactivating protein family. Type 1 RIP subfamily.

The enzyme catalyses Endohydrolysis of the N-glycosidic bond at one specific adenosine on the 28S rRNA.. This Luffa aegyptiaca (Sponge gourd) protein is Ribosome-inactivating protein luffin-alpha.